A 502-amino-acid chain; its full sequence is Glycerol kinase (502 aa).

Thr14 contributes to the ADP binding site. Positions 14, 15, and 16 each coordinate ATP. Residue Thr14 coordinates sn-glycerol 3-phosphate. Arg18 is a binding site for ADP. 3 residues coordinate sn-glycerol 3-phosphate: Arg84, Glu85, and Tyr136. Glycerol is bound by residues Arg84, Glu85, and Tyr136. Phosphohistidine; by HPr is present on His232. Asp246 serves as a coordination point for sn-glycerol 3-phosphate. Asp246 and Gln247 together coordinate glycerol. ADP is bound by residues Thr268 and Gly311. 4 residues coordinate ATP: Thr268, Gly311, Gln315, and Gly412. ADP contacts are provided by Gly412 and Asn416.

Belongs to the FGGY kinase family. As to quaternary structure, homotetramer and homodimer (in equilibrium). Post-translationally, the phosphoenolpyruvate-dependent sugar phosphotransferase system (PTS), including enzyme I, and histidine-containing protein (HPr) are required for the phosphorylation, which leads to the activation of the enzyme.

It carries out the reaction glycerol + ATP = sn-glycerol 3-phosphate + ADP + H(+). It functions in the pathway polyol metabolism; glycerol degradation via glycerol kinase pathway; sn-glycerol 3-phosphate from glycerol: step 1/1. Its activity is regulated as follows. Activated by phosphorylation and inhibited by fructose 1,6-bisphosphate (FBP). Key enzyme in the regulation of glycerol uptake and metabolism. Catalyzes the phosphorylation of glycerol to yield sn-glycerol 3-phosphate. The chain is Glycerol kinase from Streptococcus pneumoniae (strain Hungary19A-6).